A 299-amino-acid chain; its full sequence is Ubiquinol-cytochrome c reductase complex assembly factor 1 (299 aa).

This sequence belongs to the CBP3 family. As to quaternary structure, interacts with UQCC2. Interacts with UQCC3. Forms a complex, named COMB/coordinator of mitochondrial CYTB biogenesis, composed of UQCC1, UQCC2, UQCC4, UQCC5 and UQCC6; stabilizes nascent cytochrome b/MT-CYB and promotes its membrane insertion. Forms a complex, named COMB/coordinator of mitochondrial CYTB biogenesis, composed of UQCC1, UQCC2, UQCC4, UQCC5 and UQCC6; stabilizes nascent cytochrome b/MT-CYB and promotes its membrane insertion. Forms a complex, named COMA, composed of UQCC1, UQCC2 and UQCC4; activates MT-CYB translation. Forms a complex, named COMC, composed of UQCC1, UQCC2; UQCC3 and UQCC4; mediates MT-CYB hemylation and association with the first nuclear-encoded CIII subunit UQCRQ.

It is found in the mitochondrion inner membrane. It localises to the cytoplasmic vesicle. Required for the assembly of the ubiquinol-cytochrome c reductase complex (mitochondrial respiratory chain complex III or cytochrome b-c1 complex). Involved in cytochrome b translation and/or stability. The sequence is that of Ubiquinol-cytochrome c reductase complex assembly factor 1 (UQCC1) from Homo sapiens (Human).